The following is a 463-amino-acid chain: Asparagine--tRNA ligase (463 aa).

This sequence belongs to the class-II aminoacyl-tRNA synthetase family. Homodimer.

The protein resides in the cytoplasm. The enzyme catalyses tRNA(Asn) + L-asparagine + ATP = L-asparaginyl-tRNA(Asn) + AMP + diphosphate + H(+). The sequence is that of Asparagine--tRNA ligase from Clostridium acetobutylicum (strain ATCC 824 / DSM 792 / JCM 1419 / IAM 19013 / LMG 5710 / NBRC 13948 / NRRL B-527 / VKM B-1787 / 2291 / W).